Reading from the N-terminus, the 211-residue chain is 3-demethoxyubiquinol 3-hydroxylase (211 aa).

The interval 22–43 (KHPLNPNRKSPSANTVDGQLSD) is disordered. Over residues 28–42 (NRKSPSANTVDGQLS) the composition is skewed to polar residues. Residues E60, E90, H93, E142, E174, and H177 each coordinate Fe cation.

Belongs to the COQ7 family. Fe cation is required as a cofactor.

It is found in the cell membrane. It carries out the reaction a 5-methoxy-2-methyl-3-(all-trans-polyprenyl)benzene-1,4-diol + AH2 + O2 = a 3-demethylubiquinol + A + H2O. It participates in cofactor biosynthesis; ubiquinone biosynthesis. In terms of biological role, catalyzes the hydroxylation of 2-nonaprenyl-3-methyl-6-methoxy-1,4-benzoquinol during ubiquinone biosynthesis. This chain is 3-demethoxyubiquinol 3-hydroxylase, found in Francisella philomiragia subsp. philomiragia (strain ATCC 25017 / CCUG 19701 / FSC 153 / O#319-036).